Consider the following 121-residue polypeptide: Natriuretic peptides B (121 aa).

A signal peptide spans 1–26 (MDLLKVLSQMILFLLFLYLSPLGGHS). The disordered stretch occupies residues 61 to 89 (LKDQGLTKEHPKRVLRSQGSTLRVQQRPQ). The segment covering 77–89 (SQGSTLRVQQRPQ) has biased composition (polar residues). Cysteine 99 and cysteine 115 are disulfide-bonded.

This sequence belongs to the natriuretic peptide family. The precursor molecule is proteolytically cleaved by the endoprotease Furin to produce brain natriuretic peptide 45. May undergo further proteolytic cleavage by various proteases such as DPP4, MME and possibly FAP, to give rise to a variety of shorter peptides. May be cleaved at Ser-91 by the prolyl endopeptidase FAP (seprase) activity (in vitro). May be degraded by IDE. During IDE degradation, the resulting products initially increase the activation of NPR1 and can also stimulate NPR2 to produce cGMP before the fragments are completely degraded and inactivated by IDE (in vitro). Expressed abundantly in the ventricle, and in a lesser extent in the atrium (at protein level).

The protein localises to the secreted. Functionally, cardiac hormone that plays a key role in mediating cardio-renal homeostasis. May also function as a paracrine antifibrotic factor in the heart. Acts by specifically binding and stimulating NPR1 to produce cGMP, which in turn activates effector proteins that drive various biological responses. Likely involved in regulating the extracellular fluid volume and maintaining the fluid-electrolyte balance through natriuresis, diuresis, kaluresis and chloruresis. This chain is Natriuretic peptides B (Nppb), found in Mus musculus (Mouse).